The sequence spans 557 residues: Dihydroxy-acid dehydratase (557 aa).

Residue D78 coordinates Mg(2+). C119 contributes to the [2Fe-2S] cluster binding site. 2 residues coordinate Mg(2+): D120 and K121. K121 carries the N6-carboxylysine modification. C192 lines the [2Fe-2S] cluster pocket. E446 is a Mg(2+) binding site. S472 serves as the catalytic Proton acceptor.

This sequence belongs to the IlvD/Edd family. As to quaternary structure, homodimer. [2Fe-2S] cluster is required as a cofactor. It depends on Mg(2+) as a cofactor.

The catalysed reaction is (2R)-2,3-dihydroxy-3-methylbutanoate = 3-methyl-2-oxobutanoate + H2O. It catalyses the reaction (2R,3R)-2,3-dihydroxy-3-methylpentanoate = (S)-3-methyl-2-oxopentanoate + H2O. Its pathway is amino-acid biosynthesis; L-isoleucine biosynthesis; L-isoleucine from 2-oxobutanoate: step 3/4. It participates in amino-acid biosynthesis; L-valine biosynthesis; L-valine from pyruvate: step 3/4. Functionally, functions in the biosynthesis of branched-chain amino acids. Catalyzes the dehydration of (2R,3R)-2,3-dihydroxy-3-methylpentanoate (2,3-dihydroxy-3-methylvalerate) into 2-oxo-3-methylpentanoate (2-oxo-3-methylvalerate) and of (2R)-2,3-dihydroxy-3-methylbutanoate (2,3-dihydroxyisovalerate) into 2-oxo-3-methylbutanoate (2-oxoisovalerate), the penultimate precursor to L-isoleucine and L-valine, respectively. The polypeptide is Dihydroxy-acid dehydratase (Campylobacter fetus subsp. fetus (strain 82-40)).